Reading from the N-terminus, the 714-residue chain is Polyribonucleotide nucleotidyltransferase (714 aa).

Mg(2+) is bound by residues Asp-489 and Asp-495. A KH domain is found at 556–615; it reads PKIDTIKIDVDKIKVVIGKGGETIDKIIAETGVKIDIDEEGNVSIYSSDQDAINRAKEII. The 69-residue stretch at 625–693 folds into the S1 motif domain; it reads GEVYHAKVVR…DKGRIDASMK (69 aa). The disordered stretch occupies residues 691 to 714; that stretch reads SMKALVPRPPKPEKSEAKKEGKHD. Basic and acidic residues predominate over residues 700 to 714; sequence PKPEKSEAKKEGKHD.

It belongs to the polyribonucleotide nucleotidyltransferase family. Mg(2+) is required as a cofactor.

The protein localises to the cytoplasm. The enzyme catalyses RNA(n+1) + phosphate = RNA(n) + a ribonucleoside 5'-diphosphate. In terms of biological role, involved in mRNA degradation. Catalyzes the phosphorolysis of single-stranded polyribonucleotides processively in the 3'- to 5'-direction. This chain is Polyribonucleotide nucleotidyltransferase, found in Streptococcus equi subsp. zooepidemicus (strain H70).